Consider the following 372-residue polypeptide: GDSL esterase/lipase At1g54020 (372 aa).

The signal sequence occupies residues 1–26 (MECSSVSVLGILLVFPLLHNLVTISG). Serine 40 (nucleophile) is an active-site residue. 2 N-linked (GlcNAc...) asparagine glycosylation sites follow: asparagine 161 and asparagine 280. Catalysis depends on residues aspartate 314 and histidine 317.

Belongs to the 'GDSL' lipolytic enzyme family.

The protein localises to the secreted. The protein is GDSL esterase/lipase At1g54020 of Arabidopsis thaliana (Mouse-ear cress).